We begin with the raw amino-acid sequence, 314 residues long: Deoxymugineic acid synthase 1-D (314 aa).

Residues 1 to 21 (MGAGEKTAAGMPRIGMGTAVQ) are disordered. Asp-44 lines the NADP(+) pocket. Tyr-49 acts as the Proton donor in catalysis. His-112 provides a ligand contact to substrate. NADP(+)-binding positions include 158–159 (AN), Gln-180, 258–266 (FDEARMREN), and 273–281 (ELTEEERLR).

It belongs to the aldo/keto reductase family. Mostly expressed in root tissues, observed, at low levels, in mesocotyl and embryonic roots, seedling roots, crown and seedling leafes, mature bracts, anthers, pistil, caryopsis and embryos.

The enzyme catalyses 2'-deoxymugineate + NAD(+) = 3''-deamino-3''-oxonicotianamine + NADH + H(+). It carries out the reaction 2'-deoxymugineate + NADP(+) = 3''-deamino-3''-oxonicotianamine + NADPH + H(+). The protein operates within siderophore biosynthesis. Catalyzes the reduction of a 3''-keto intermediate during the biosynthesis of 2'-deoxymugineic acid (DMA) from L-Met. Involved in the formation of phytosiderophores (MAs) belonging to the mugineic acid family and required to acquire iron. The sequence is that of Deoxymugineic acid synthase 1-D from Triticum aestivum (Wheat).